The chain runs to 273 residues: Undecaprenyl-diphosphatase (273 aa).

Transmembrane regions (helical) follow at residues 46 to 63, 83 to 103, 109 to 129, 184 to 204, 218 to 238, and 249 to 269; these read LFEV…CWEY, FVLN…LAGK, LFNS…ILWV, ATEF…AYDL, AFGI…RGLL, and FAWY…YGLV.

The protein belongs to the UppP family.

The protein resides in the cell inner membrane. The catalysed reaction is di-trans,octa-cis-undecaprenyl diphosphate + H2O = di-trans,octa-cis-undecaprenyl phosphate + phosphate + H(+). Catalyzes the dephosphorylation of undecaprenyl diphosphate (UPP). Confers resistance to bacitracin. The sequence is that of Undecaprenyl-diphosphatase from Methylococcus capsulatus (strain ATCC 33009 / NCIMB 11132 / Bath).